The chain runs to 229 residues: Protein ras-2 (229 aa).

15 to 22 (GDGGVGKT) serves as a coordination point for GTP. The Effector region signature appears at 37-45 (YDPTIEDSY). 62 to 66 (DTAGQ) contacts GTP. The disordered stretch occupies residues 109-132 (KESTSSPSAYPGSSPLAATNPSAP). A compositionally biased stretch (low complexity) spans 111-126 (STSSPSAYPGSSPLAA). Residue 140-143 (NKSD) coordinates GTP. The segment at 188 to 229 (LRKQRQQGQSTPRALPPSGNSKSEKYSGTEKPKRPRGKCLII) is disordered. Residues 209–219 (KSEKYSGTEKP) are compositionally biased toward basic and acidic residues. Over residues 220 to 229 (KRPRGKCLII) the composition is skewed to basic residues. Cysteine methyl ester is present on C226. A lipid anchor (S-farnesyl cysteine) is attached at C226. A propeptide spans 227 to 229 (LII) (removed in mature form).

The protein belongs to the small GTPase superfamily. Ras family.

The protein resides in the cell membrane. The catalysed reaction is GTP + H2O = GDP + phosphate + H(+). In terms of biological role, ras proteins bind GDP/GTP and possess intrinsic GTPase activity. This is Protein ras-2 (ras-2) from Neurospora crassa (strain ATCC 24698 / 74-OR23-1A / CBS 708.71 / DSM 1257 / FGSC 987).